A 218-amino-acid polypeptide reads, in one-letter code: Octanoyltransferase (218 aa).

The BPL/LPL catalytic domain maps to 32-218; it reads GEAAEAIWLL…LRTFPQHFPD (187 aa). Residues 71–78, 151–153, and 164–166 each bind substrate; these read RGGQYTYH, AIG, and GLS. The active-site Acyl-thioester intermediate is the Cys182.

It belongs to the LipB family.

The protein localises to the cytoplasm. The enzyme catalyses octanoyl-[ACP] + L-lysyl-[protein] = N(6)-octanoyl-L-lysyl-[protein] + holo-[ACP] + H(+). Its pathway is protein modification; protein lipoylation via endogenous pathway; protein N(6)-(lipoyl)lysine from octanoyl-[acyl-carrier-protein]: step 1/2. Its function is as follows. Catalyzes the transfer of endogenously produced octanoic acid from octanoyl-acyl-carrier-protein onto the lipoyl domains of lipoate-dependent enzymes. Lipoyl-ACP can also act as a substrate although octanoyl-ACP is likely to be the physiological substrate. This chain is Octanoyltransferase, found in Cereibacter sphaeroides (strain ATCC 17023 / DSM 158 / JCM 6121 / CCUG 31486 / LMG 2827 / NBRC 12203 / NCIMB 8253 / ATH 2.4.1.) (Rhodobacter sphaeroides).